A 282-amino-acid chain; its full sequence is HTH-type transcriptional activator RhaR (282 aa).

One can recognise an HTH araC/xylS-type domain in the interval 179–277; the sequence is DKLITALAGS…GMTPVQWRHR (99 aa). DNA-binding regions (H-T-H motif) lie at residues 196–217 and 244–267; these read EKFCEQEQCSERALRQQFRTQT and VSEVAMRCGFEDSNYFSVVFNREV.

Binds DNA as a dimer.

The protein resides in the cytoplasm. Its function is as follows. Activates expression of the rhaSR operon in response to L-rhamnose. This chain is HTH-type transcriptional activator RhaR, found in Enterobacter sp. (strain 638).